We begin with the raw amino-acid sequence, 309 residues long: tRNA pseudouridine synthase B (309 aa).

Asp-51 (nucleophile) is an active-site residue.

It belongs to the pseudouridine synthase TruB family. Type 1 subfamily.

It catalyses the reaction uridine(55) in tRNA = pseudouridine(55) in tRNA. Its function is as follows. Responsible for synthesis of pseudouridine from uracil-55 in the psi GC loop of transfer RNAs. This Coxiella burnetii (strain RSA 331 / Henzerling II) protein is tRNA pseudouridine synthase B.